The chain runs to 712 residues: Polyphosphate kinase (712 aa).

Asn-49 provides a ligand contact to ATP. Arg-398 and Arg-428 together coordinate Mg(2+). The active-site Phosphohistidine intermediate is His-458. ATP is bound by residues Tyr-491, Arg-587, and His-615.

It belongs to the polyphosphate kinase 1 (PPK1) family. The cofactor is Mg(2+). In terms of processing, an intermediate of this reaction is the autophosphorylated ppk in which a phosphate is covalently linked to a histidine residue through a N-P bond.

The catalysed reaction is [phosphate](n) + ATP = [phosphate](n+1) + ADP. Catalyzes the reversible transfer of the terminal phosphate of ATP to form a long-chain polyphosphate (polyP). This chain is Polyphosphate kinase, found in Parasynechococcus marenigrum (strain WH8102).